Reading from the N-terminus, the 449-residue chain is Allantoinase (449 aa).

The Zn(2+) site is built by His61, His63, Lys148, His184, His240, and Asp313. Lys148 is modified (N6-carboxylysine).

It belongs to the metallo-dependent hydrolases superfamily. Allantoinase family. In terms of assembly, homotetramer. Requires Zn(2+) as cofactor. In terms of processing, carboxylation allows a single lysine to coordinate two zinc ions.

The catalysed reaction is (S)-allantoin + H2O = allantoate + H(+). Its pathway is nitrogen metabolism; (S)-allantoin degradation; allantoate from (S)-allantoin: step 1/1. Catalyzes the conversion of allantoin (5-ureidohydantoin) to allantoic acid by hydrolytic cleavage of the five-member hydantoin ring. In Desulfitobacterium hafniense (strain Y51), this protein is Allantoinase.